The primary structure comprises 412 residues: Serine hydroxymethyltransferase (412 aa).

Residues leucine 117 and 121 to 123 (GHL) each bind (6S)-5,6,7,8-tetrahydrofolate. The residue at position 226 (lysine 226) is an N6-(pyridoxal phosphate)lysine. Glutamate 241 serves as a coordination point for (6S)-5,6,7,8-tetrahydrofolate.

The protein belongs to the SHMT family. Homodimer. Requires pyridoxal 5'-phosphate as cofactor.

Its subcellular location is the cytoplasm. The catalysed reaction is (6R)-5,10-methylene-5,6,7,8-tetrahydrofolate + glycine + H2O = (6S)-5,6,7,8-tetrahydrofolate + L-serine. It functions in the pathway one-carbon metabolism; tetrahydrofolate interconversion. Its pathway is amino-acid biosynthesis; glycine biosynthesis; glycine from L-serine: step 1/1. Its function is as follows. Catalyzes the reversible interconversion of serine and glycine with tetrahydrofolate (THF) serving as the one-carbon carrier. This reaction serves as the major source of one-carbon groups required for the biosynthesis of purines, thymidylate, methionine, and other important biomolecules. Also exhibits THF-independent aldolase activity toward beta-hydroxyamino acids, producing glycine and aldehydes, via a retro-aldol mechanism. The protein is Serine hydroxymethyltransferase of Staphylococcus carnosus (strain TM300).